The chain runs to 498 residues: ATP synthase subunit beta, chloroplastic (498 aa).

172 to 179 (GGAGVGKT) contacts ATP.

Belongs to the ATPase alpha/beta chains family. F-type ATPases have 2 components, CF(1) - the catalytic core - and CF(0) - the membrane proton channel. CF(1) has five subunits: alpha(3), beta(3), gamma(1), delta(1), epsilon(1). CF(0) has four main subunits: a(1), b(1), b'(1) and c(9-12).

The protein resides in the plastid. Its subcellular location is the chloroplast thylakoid membrane. It catalyses the reaction ATP + H2O + 4 H(+)(in) = ADP + phosphate + 5 H(+)(out). Produces ATP from ADP in the presence of a proton gradient across the membrane. The catalytic sites are hosted primarily by the beta subunits. This Helianthus annuus (Common sunflower) protein is ATP synthase subunit beta, chloroplastic.